The following is a 439-amino-acid chain: C4-dicarboxylate transport protein (439 aa).

9 helical membrane-spanning segments follow: residues 10–30, 45–65, 77–97, 145–165, 185–205, 223–243, 290–310, 332–352, and 353–373; these read LYVQVLAAIVIGVVLGHFYPP, LIKMIIAPVIFCTVVLGIAGM, LALLYFEIVSTLALIVGLVLV, AFAKGDILQVLLISVLFGFAL, VLFAIVGTIMKAAPIGAFGAM, LMGTFYLTCLFFIFAVLGTIT, VVGLVIPTGYSFNLDGTAIYL, TLLAVLLLTSKGAAGITGSGF, and IVLAASLSAVGHLPVAGLALI. The segment at 415–439 is disordered; sequence LNGQTAEEASAPQALPDRMESRIHH.

The protein belongs to the dicarboxylate/amino acid:cation symporter (DAACS) (TC 2.A.23) family.

Its subcellular location is the cell inner membrane. Its function is as follows. Responsible for the transport of dicarboxylates such as succinate, fumarate, and malate from the periplasm across the membrane. The chain is C4-dicarboxylate transport protein from Verminephrobacter eiseniae (strain EF01-2).